The following is a 149-amino-acid chain: Large ribosomal subunit protein bL9 (149 aa).

The protein belongs to the bacterial ribosomal protein bL9 family.

Binds to the 23S rRNA. The protein is Large ribosomal subunit protein bL9 of Haemophilus influenzae (strain PittGG).